Reading from the N-terminus, the 711-residue chain is Polyribonucleotide nucleotidyltransferase (711 aa).

Mg(2+)-binding residues include D486 and D492. The region spanning 553 to 612 is the KH domain; the sequence is PRIHTIKINPDKIKDVIGKGGSVIRALTEETGTTIEIEDDGTVKIAATDGEKAKNAIRRI. One can recognise an S1 motif domain in the interval 622–690; that stretch reads GRVYNGKVTR…RQGRIRLSIK (69 aa). Positions 689 to 711 are disordered; that stretch reads IKEATEQSQPAAAPEAPAAEQGE. The span at 694-711 shows a compositional bias: low complexity; the sequence is EQSQPAAAPEAPAAEQGE.

Belongs to the polyribonucleotide nucleotidyltransferase family. Component of the RNA degradosome, which is a multiprotein complex involved in RNA processing and mRNA degradation. Requires Mg(2+) as cofactor.

The protein resides in the cytoplasm. It carries out the reaction RNA(n+1) + phosphate = RNA(n) + a ribonucleoside 5'-diphosphate. Functionally, involved in mRNA degradation. Catalyzes the phosphorolysis of single-stranded polyribonucleotides processively in the 3'- to 5'-direction. This Escherichia fergusonii (strain ATCC 35469 / DSM 13698 / CCUG 18766 / IAM 14443 / JCM 21226 / LMG 7866 / NBRC 102419 / NCTC 12128 / CDC 0568-73) protein is Polyribonucleotide nucleotidyltransferase.